Reading from the N-terminus, the 422-residue chain is uncharacterized protein (422 aa).

The disordered stretch occupies residues 1-22 (MIQNNPKSIGSSSNKSARSSGS). Residues 7–22 (KSIGSSSNKSARSSGS) are compositionally biased toward low complexity.

This is an uncharacterized protein from Acanthamoeba polyphaga mimivirus (APMV).